The following is a 264-amino-acid chain: Thymidylate synthase (264 aa).

Position 21 (Arg-21) interacts with dUMP. A (6R)-5,10-methylene-5,6,7,8-tetrahydrofolate-binding site is contributed by His-51. Residue 126-127 (RR) coordinates dUMP. Catalysis depends on Cys-146, which acts as the Nucleophile. Residues 166-169 (RSCD), Asn-177, and 207-209 (HLY) each bind dUMP. Asp-169 serves as a coordination point for (6R)-5,10-methylene-5,6,7,8-tetrahydrofolate. Residue Ser-263 coordinates (6R)-5,10-methylene-5,6,7,8-tetrahydrofolate.

This sequence belongs to the thymidylate synthase family. Bacterial-type ThyA subfamily. Homodimer.

It is found in the cytoplasm. The catalysed reaction is dUMP + (6R)-5,10-methylene-5,6,7,8-tetrahydrofolate = 7,8-dihydrofolate + dTMP. Its pathway is pyrimidine metabolism; dTTP biosynthesis. Catalyzes the reductive methylation of 2'-deoxyuridine-5'-monophosphate (dUMP) to 2'-deoxythymidine-5'-monophosphate (dTMP) while utilizing 5,10-methylenetetrahydrofolate (mTHF) as the methyl donor and reductant in the reaction, yielding dihydrofolate (DHF) as a by-product. This enzymatic reaction provides an intracellular de novo source of dTMP, an essential precursor for DNA biosynthesis. This Buchnera aphidicola subsp. Acyrthosiphon pisum (strain Tuc7) protein is Thymidylate synthase.